A 907-amino-acid chain; its full sequence is Alanine--tRNA ligase (907 aa).

Zn(2+) contacts are provided by His-581, His-585, Cys-683, and His-687.

The protein belongs to the class-II aminoacyl-tRNA synthetase family. Requires Zn(2+) as cofactor.

The protein resides in the cytoplasm. It carries out the reaction tRNA(Ala) + L-alanine + ATP = L-alanyl-tRNA(Ala) + AMP + diphosphate. In terms of biological role, catalyzes the attachment of alanine to tRNA(Ala) in a two-step reaction: alanine is first activated by ATP to form Ala-AMP and then transferred to the acceptor end of tRNA(Ala). Also edits incorrectly charged Ser-tRNA(Ala) and Gly-tRNA(Ala) via its editing domain. The sequence is that of Alanine--tRNA ligase from Bdellovibrio bacteriovorus (strain ATCC 15356 / DSM 50701 / NCIMB 9529 / HD100).